We begin with the raw amino-acid sequence, 125 residues long: Large ribosomal subunit protein bL12 (125 aa).

This sequence belongs to the bacterial ribosomal protein bL12 family. In terms of assembly, homodimer. Part of the ribosomal stalk of the 50S ribosomal subunit. Forms a multimeric L10(L12)X complex, where L10 forms an elongated spine to which 2 to 4 L12 dimers bind in a sequential fashion. Binds GTP-bound translation factors.

Functionally, forms part of the ribosomal stalk which helps the ribosome interact with GTP-bound translation factors. Is thus essential for accurate translation. The chain is Large ribosomal subunit protein bL12 from Methylibium petroleiphilum (strain ATCC BAA-1232 / LMG 22953 / PM1).